A 192-amino-acid chain; its full sequence is Xanthine phosphoribosyltransferase (192 aa).

2 residues coordinate xanthine: leucine 20 and asparagine 27. 128-132 (ANGDA) is a 5-phospho-alpha-D-ribose 1-diphosphate binding site. Lysine 156 contributes to the xanthine binding site.

This sequence belongs to the purine/pyrimidine phosphoribosyltransferase family. Xpt subfamily. As to quaternary structure, homodimer.

It is found in the cytoplasm. It catalyses the reaction XMP + diphosphate = xanthine + 5-phospho-alpha-D-ribose 1-diphosphate. It participates in purine metabolism; XMP biosynthesis via salvage pathway; XMP from xanthine: step 1/1. In terms of biological role, converts the preformed base xanthine, a product of nucleic acid breakdown, to xanthosine 5'-monophosphate (XMP), so it can be reused for RNA or DNA synthesis. This Staphylococcus aureus (strain bovine RF122 / ET3-1) protein is Xanthine phosphoribosyltransferase.